Reading from the N-terminus, the 414-residue chain is uncharacterized protein (414 aa).

This is an uncharacterized protein from Rickettsia conorii (strain ATCC VR-613 / Malish 7).